Consider the following 451-residue polypeptide: uncharacterized protein (451 aa).

The segment at 415–435 (AHGDTEWLPPPHLDHGQPRVN) is disordered.

It belongs to the Rv1128c/1148c/1588c/1702c/1945/3466 family.

This is an uncharacterized protein from Mycobacterium tuberculosis (strain ATCC 25618 / H37Rv).